An 865-amino-acid polypeptide reads, in one-letter code: Alanine--tRNA ligase (865 aa).

Zn(2+) is bound by residues His556, His560, Cys660, and His664.

This sequence belongs to the class-II aminoacyl-tRNA synthetase family. Zn(2+) is required as a cofactor.

It localises to the cytoplasm. The enzyme catalyses tRNA(Ala) + L-alanine + ATP = L-alanyl-tRNA(Ala) + AMP + diphosphate. Its function is as follows. Catalyzes the attachment of alanine to tRNA(Ala) in a two-step reaction: alanine is first activated by ATP to form Ala-AMP and then transferred to the acceptor end of tRNA(Ala). Also edits incorrectly charged Ser-tRNA(Ala) and Gly-tRNA(Ala) via its editing domain. The chain is Alanine--tRNA ligase from Vesicomyosocius okutanii subsp. Calyptogena okutanii (strain HA).